The sequence spans 1012 residues: Ubiquitin-like modifier-activating enzyme 7 (1012 aa).

The 1-1 repeat unit spans residues 23–159 (GSPAMQRIQG…DTRGLVGQLF (137 aa)). A 2 approximate repeats region spans residues 23–575 (GSPAMQRIQG…GTWGSATVFM (553 aa)). Position 266 is a phosphoserine (Ser-266). The 1-2 repeat unit spans residues 423-575 (GAGFQEKLRR…GTWGSATVFM (153 aa)). Residue 442–471 (AIGCELLKVFALVGLGAGNSGGLTVVDMDH) coordinates ATP. Cys-599 acts as the Glycyl thioester intermediate in catalysis.

The protein belongs to the ubiquitin-activating E1 family. As to quaternary structure, (Microbial infection) Interacts with human cytomegalovirus proteins NEC2/UL50 and UL26; these interactions inhibit ISGylation and cause proteasomal degradation of UBA7. (Microbial infection) Interacts with rotavirus non-structural protein 5 (NSP5); this interaction promotes UBA7 proteasomal degradation. In terms of assembly, monomer. Binds and is involved in the conjugation of G1P2/ISG15. Post-translationally, ISGylated. Ubiquitinated by RNF170. As to expression, expressed in a variety of normal and tumor cell types, but is reduced in lung cancer cell lines.

It localises to the cytoplasm. It is found in the nucleus. The protein operates within protein modification; protein ubiquitination. Functionally, E1-activating enzyme that catalyzes the covalent conjugation of the ubiquitin-like protein product of ISG15 to additional interferon stimulated proteins (ISGs) as well as other cellular proteins such as P53 in a process termed protein ISGylation. Plays an essential role in antiviral immunity together with ISG15 by restricting the replication of many viruses including rabies virus, influenza virus, sindbis virus, rotavirus or human cytomegalovirus. For example, ISG15 modification of influenza A protein NS1 disrupts the association of the NS1 with importin-alpha leading to NS1 nuclear import inhibition. ISGylation of human cytomegalovirs protein UL26 regulates its stability and inhibits its activities to suppress NF-kappa-B signaling. This is Ubiquitin-like modifier-activating enzyme 7 from Homo sapiens (Human).